A 574-amino-acid chain; its full sequence is Glycine--tRNA ligase (574 aa).

Positions 96 and 162 each coordinate substrate. ATP is bound by residues 194-196, 204-209, 327-328, and 450-453; these read RNE, IRLREF, EC, and GIDR. 209-213 is a substrate binding site; sequence FTQAE. 446 to 450 contributes to the substrate binding site; that stretch reads EPSYG.

It belongs to the class-II aminoacyl-tRNA synthetase family.

Its subcellular location is the cytoplasm. The enzyme catalyses tRNA(Gly) + glycine + ATP = glycyl-tRNA(Gly) + AMP + diphosphate. Functionally, catalyzes the attachment of glycine to tRNA(Gly). The sequence is that of Glycine--tRNA ligase from Methanococcus maripaludis (strain C7 / ATCC BAA-1331).